Reading from the N-terminus, the 136-residue chain is Small ribosomal subunit protein uS19 (136 aa).

Residues 114–136 are disordered; sequence RSRVSHGSAGVGATRSSKFVPLK.

Belongs to the universal ribosomal protein uS19 family.

In terms of biological role, protein S19 forms a complex with S13 that binds strongly to the 16S ribosomal RNA. The chain is Small ribosomal subunit protein uS19 from Methanosarcina acetivorans (strain ATCC 35395 / DSM 2834 / JCM 12185 / C2A).